The following is a 325-amino-acid chain: Serine/threonine-protein kinase CtkA (325 aa).

ATP is bound by residues 21–24 (NGNK), K37, Q72, and 88–90 (KDF). Positions 160 and 179 each coordinate Mg(2+). Residue D179 coordinates ATP. Residues 296–325 (QHKQAHSNPYDNADDLDNSNEYTPTPKRRR) are disordered.

Autophosphorylates on either Thr-3 or Thr-7.

The protein resides in the secreted. Its subcellular location is the host cytoplasm. It localises to the host cytosol. It is found in the host nucleus. It carries out the reaction L-seryl-[protein] + ATP = O-phospho-L-seryl-[protein] + ADP + H(+). The enzyme catalyses L-threonyl-[protein] + ATP = O-phospho-L-threonyl-[protein] + ADP + H(+). In terms of biological role, virulence factor acting as a pro-inflammatory protein that induces the secretion of the pro-inflammatory cytokines TNF-alpha (tumor necrosis factor-alpha) and IL-8 (interleukin-8) from human macrophages, as well as enhanced translocation of the transcription factor NF-kappa-B complex in macrophages. Is a kinase capable of autophosphorylating itself at a threonine residue near the N-terminus. Also leads to enhanced phosphorylation of the NF-kappa-B p65 subunit (RELA) at 'Ser-276' in human epithelial cancer cells; its kinase activity is required for this enhanced phosphorylation that up-regulates NF-kappa-B activity, but it does not directly phosphorylate this protein. Thus, the kinase activity of CtkA may play an important role in the induction of host inflammatory responses during H.pylori infection. The sequence is that of Serine/threonine-protein kinase CtkA (ctkA) from Helicobacter pylori (strain J99 / ATCC 700824) (Campylobacter pylori J99).